Reading from the N-terminus, the 637-residue chain is DEAD-box ATP-dependent RNA helicase 37 (637 aa).

Disordered stretches follow at residues 1–68 and 86–141; these read MRSS…QPSA and GPAS…EEAT. Composition is skewed to low complexity over residues 10-28 and 46-68; these read ANAE…PVAN and GQAP…QPSA. Positions 104–116 are enriched in gly residues; it reads GGRGGGGGGGGGW. The Q motif signature appears at 174-202; that stretch reads NTFAEIDLGDALNENIRRCKYVKPTPVQR. The 185-residue stretch at 205-389 folds into the Helicase ATP-binding domain; that stretch reads IPISIAGRDL…SDFLADYIFL (185 aa). 218 to 225 lines the ATP pocket; it reads AQTGSGKT. The short motif at 333-336 is the DEAD box element; the sequence is DEAD. Residues 416 to 567 form the Helicase C-terminal domain; sequence YLMDLLHAQK…EVPQWLERYS (152 aa). Residues 570–610 are disordered; it reads SSFGGGGGRNRRSGGARFGGRDFRRDNRGGGGGGYGGGGGG. A compositionally biased stretch (basic and acidic residues) spans 588–597; it reads GGRDFRRDNR. The span at 598 to 610 shows a compositional bias: gly residues; the sequence is GGGGGGYGGGGGG.

It belongs to the DEAD box helicase family. DDX3/DED1 subfamily.

The catalysed reaction is ATP + H2O = ADP + phosphate + H(+). The chain is DEAD-box ATP-dependent RNA helicase 37 (PL10A) from Oryza sativa subsp. japonica (Rice).